An 895-amino-acid chain; its full sequence is MQGIEVEFLRSRGYVRKRCPKCGEYFWTLKDRETCGEAPCEPYTFIGRGRQNKSLEEVREDFLRFFERRGHTRINRYPVIARWREDLFLTSASIVDFQPFITAGIVPPPANPLTISQPCIRLKDIDKVGPTMGRHLSIFEMMAHHAFNTKDKFVYWIDRTVELFHEYATSVLGIPEEEITYKEGIWEGGGNAGPDLEPIAGGLEIATLVFMQYRIENGSYVPMDTRVVDTGYGLERITWFLRGDPTGFHAVYGALLHEFMDKLGVSEPDLSLLSEYSKVSSILRELEKGRSISSLRREAALLIGVSEEELEEKIAPLEAVFSLLDHTKALSFMIADGLVPSNVNEGYLGRLLIRRSLRILNQLGSEVPLSELAVRQAEYWSSKGFPELREAIDRIAEIVSIEEERYKEAVERGAKIISDLMREKGRLSVDDLIMLYDSHGLSPDIVRRIAGDVDVPDNFFEMIAARHEARKPEPPKVFERMDELRRYPPTKLLYYQDPYLLEFEARVLGYVDGKMILDRTAFYPEGGGQPSDIGSFEWRGIEVKVVGAEKHGGWILHSVEGDLPPAGEVVRARVDSWRRLNRMRHHTATHVILEAARRVLGSHVWQWGAQKGDEESRLDITHYKGISQEELRRIEMLANEVVMRNIPVRTLWLVRTDAERRYGFTLYQGGVVPDPVLRVVEIEGFNAQACGGTHVLRTGEIGPIKIWRARKIQDGVIRLEFSAGVPAVKRIIDYHQKIKDIAQSAGISEEEIDTFFRGMMEELKELRKERRRMMKEAEERSIERALEAYESTGRHKLSIVRLESIGIDEGIKLADKLSSDRRIVLLTKESGDRVELALLATNYGEGEVDAGSLLRELSREMGGGGGGNWKLGKGSVPKDRLDEFMGVLRKRLEGI.

Zn(2+) is bound by residues histidine 586, histidine 590, cysteine 690, and histidine 694.

The protein belongs to the class-II aminoacyl-tRNA synthetase family. The cofactor is Zn(2+).

It is found in the cytoplasm. It carries out the reaction tRNA(Ala) + L-alanine + ATP = L-alanyl-tRNA(Ala) + AMP + diphosphate. Its function is as follows. Catalyzes the attachment of alanine to tRNA(Ala) in a two-step reaction: alanine is first activated by ATP to form Ala-AMP and then transferred to the acceptor end of tRNA(Ala). Also edits incorrectly charged Ser-tRNA(Ala) and Gly-tRNA(Ala) via its editing domain. The chain is Alanine--tRNA ligase from Korarchaeum cryptofilum (strain OPF8).